The sequence spans 87 residues: Large ribosomal subunit protein bL27 (87 aa).

Residues 1–21 (MAHKKAGGSSRNGRDSESKRL) form a disordered region.

The protein belongs to the bacterial ribosomal protein bL27 family.

In Burkholderia mallei (strain NCTC 10247), this protein is Large ribosomal subunit protein bL27.